Reading from the N-terminus, the 371-residue chain is Cytochrome b (371 aa).

4 helical membrane-spanning segments follow: residues 24–44, 68–89, 104–124, and 169–189; these read FGSMLLACLTLQITTGFFLAL, WTMQNLHSIGASMFFICIYIHI, WLSGITLLATLMATAFFGYVL, and FFALHFILPFAIVSLTSVHIV. Histidine 74 and histidine 88 together coordinate heme b. Residues histidine 173 and histidine 187 each contribute to the heme b site. Histidine 192 provides a ligand contact to a ubiquinone. The next 4 helical transmembrane spans lie at 217-237, 279-299, 311-331, and 338-357; these read YKDTLMLTFMITTLFMIMSFA, LGGTLALVMSIAILMTMPFTH, LSQLMFWTLIATFITITWTAT, and FITIGQLTSILYFSFFMTNP.

This sequence belongs to the cytochrome b family. The cytochrome bc1 complex contains 3 respiratory subunits (MT-CYB, CYC1 and UQCRFS1), 2 core proteins (UQCRC1 and UQCRC2) and probably 6 low-molecular weight proteins. The cofactor is heme b.

The protein localises to the mitochondrion inner membrane. Component of the ubiquinol-cytochrome c reductase complex (complex III or cytochrome b-c1 complex) that is part of the mitochondrial respiratory chain. The b-c1 complex mediates electron transfer from ubiquinol to cytochrome c. Contributes to the generation of a proton gradient across the mitochondrial membrane that is then used for ATP synthesis. The protein is Cytochrome b (MT-CYB) of Homoroselaps lacteus (Spotted harlequin snake).